Consider the following 356-residue polypeptide: sn-glycerol-3-phosphate import ATP-binding protein UgpC (356 aa).

The region spanning 4–235 (LKLQAVTKSW…PASRFVASFI (232 aa)) is the ABC transporter domain. 37–44 (GPSGCGKS) contributes to the ATP binding site.

Belongs to the ABC transporter superfamily. sn-glycerol-3-phosphate importer (TC 3.A.1.1.3) family. The complex is composed of two ATP-binding proteins (UgpC), two transmembrane proteins (UgpA and UgpE) and a solute-binding protein (UgpB).

The protein resides in the cell inner membrane. The catalysed reaction is sn-glycerol 3-phosphate(out) + ATP + H2O = sn-glycerol 3-phosphate(in) + ADP + phosphate + H(+). Its function is as follows. Part of the ABC transporter complex UgpBAEC involved in sn-glycerol-3-phosphate (G3P) import. Responsible for energy coupling to the transport system. The sequence is that of sn-glycerol-3-phosphate import ATP-binding protein UgpC from Salmonella choleraesuis (strain SC-B67).